The sequence spans 129 residues: Defensin-like protein 182 (129 aa).

The first 26 residues, 1 to 26, serve as a signal peptide directing secretion; it reads METVTSLVFIVNLLIIFTSVVNQARG. 8 disulfide bridges follow: cysteine 29–cysteine 70, cysteine 36–cysteine 55, cysteine 39–cysteine 64, cysteine 43–cysteine 66, cysteine 83–cysteine 129, cysteine 94–cysteine 114, cysteine 99–cysteine 123, and cysteine 103–cysteine 125.

Belongs to the DEFL family.

The protein localises to the secreted. In terms of biological role, confers broad-spectrum resistance to pathogens. In Arabidopsis thaliana (Mouse-ear cress), this protein is Defensin-like protein 182 (PDF3.2).